Here is a 215-residue protein sequence, read N- to C-terminus: Cytochrome b6 (215 aa).

Residues 32-52 (IFYCLGGITLTCFLVQIATGF) form a helical membrane-spanning segment. C35 is a heme c binding site. 2 residues coordinate heme b: H86 and H100. Transmembrane regions (helical) follow at residues 90–110 (ASMMVLVMILHVFRVYLTGGF), 116–136 (LTWVTGVILAVLTVSFGVTGY), and 186–206 (LHTFVLPLLTAVFMLMHFLMI). Residues H187 and H202 each contribute to the heme b site.

It belongs to the cytochrome b family. PetB subfamily. The 4 large subunits of the cytochrome b6-f complex are cytochrome b6, subunit IV (17 kDa polypeptide, PetD), cytochrome f and the Rieske protein, while the 4 small subunits are PetG, PetL, PetM and PetN. The complex functions as a dimer. Heme b serves as cofactor. The cofactor is heme c.

It localises to the plastid. It is found in the chloroplast thylakoid membrane. Functionally, component of the cytochrome b6-f complex, which mediates electron transfer between photosystem II (PSII) and photosystem I (PSI), cyclic electron flow around PSI, and state transitions. The polypeptide is Cytochrome b6 (Adiantum capillus-veneris (Maidenhair fern)).